Consider the following 72-residue polypeptide: Translation initiation factor IF-1 (72 aa).

Residues 1-72 enclose the S1-like domain; the sequence is MAGNDVIEIE…TKGRITYRHK (72 aa).

This sequence belongs to the IF-1 family. In terms of assembly, component of the 30S ribosomal translation pre-initiation complex which assembles on the 30S ribosome in the order IF-2 and IF-3, IF-1 and N-formylmethionyl-tRNA(fMet); mRNA recruitment can occur at any time during PIC assembly.

The protein resides in the cytoplasm. In terms of biological role, one of the essential components for the initiation of protein synthesis. Stabilizes the binding of IF-2 and IF-3 on the 30S subunit to which N-formylmethionyl-tRNA(fMet) subsequently binds. Helps modulate mRNA selection, yielding the 30S pre-initiation complex (PIC). Upon addition of the 50S ribosomal subunit IF-1, IF-2 and IF-3 are released leaving the mature 70S translation initiation complex. This Oenococcus oeni (strain ATCC BAA-331 / PSU-1) protein is Translation initiation factor IF-1.